The primary structure comprises 162 residues: Putative auxin-responsive protein IAA28 (162 aa).

The region spanning 23–118 (SRFVKVFMHG…TVKRIYIVPA (96 aa)) is the PB1 domain. Positions 122-141 (NESEYQEEEEDNAAAAATAD) are disordered.

It belongs to the Aux/IAA family. As to quaternary structure, homodimers and heterodimers.

The protein resides in the nucleus. Aux/IAA proteins are short-lived transcriptional factors that function as repressors of early auxin response genes at low auxin concentrations. The sequence is that of Putative auxin-responsive protein IAA28 (IAA28) from Oryza sativa subsp. japonica (Rice).